Consider the following 114-residue polypeptide: MIDRVLLELNKTEGIKGSMVVGKDGLVIASQLPGSVDAELVGAMASAAFGAAERTAAEIGMGTLEQTMIEGEHGKTLMVDAGEGILVVLTDAKVNLGLIRITMKRAAEKIKAMF.

This sequence to M.jannaschii MJ0310 and MJ0714.

This is an uncharacterized protein from Methanocaldococcus jannaschii (strain ATCC 43067 / DSM 2661 / JAL-1 / JCM 10045 / NBRC 100440) (Methanococcus jannaschii).